Here is a 585-residue protein sequence, read N- to C-terminus: MLGRALINKYGFLIHPRRFVHLNDKSLDGTFILPSKKNHMYDVPTNDPSGILNASDIDRINNLPFFDNTSPTKETNTKEGALLSEKLASVKELFGEDPENPSFINYRFPRGLENPYFDIQVNQLKKKRLSVTQLCTTQNWCELRNFYDFYSQNLSNQLLNLKFQVQKGKKIHKSLEDETHPELNQYKSFTHNFLALTKLSMDIDNDMDALLDNWFNSINRLVSLFTKGDGHAREIVCHGFINLEDGKLVEHLLNSDSKTKENVIISGVIDHLTLRNRHNHQVQKGAAHLDTEYQSWGNILTNLLSNLKELKSNNEIVISDIKTRSVPKIPSIESVIESSKLQTMYYKFFFSHLSQDMTQTYHSFLINAQRRGLDVDAPINPTKILTFILTNPLFANDVKNLLYGLPINHSAFDNDAKGSNTFDMTAFNDLLDRGPTSFNVPIEQDEDSSESTKCVSLRDYGHFYTKWKTPLTLKYFAARLSQIYFIVGNLVSNDLMIEYYYHNDNFHNIIFPYDPLKLGTHAHDSAMVWFGGRDMHPIEPTQKNFNTYCKFCDYRHVCSWKNKNELKLIDLGKELKKIILESSMK.

A mitochondrion-targeting transit peptide spans 1–26; that stretch reads MLGRALINKYGFLIHPRRFVHLNDKS. C141 is a binding site for [4Fe-4S] cluster. 2 residues coordinate Mg(2+): D270 and D320. Residues C549, C552, and C558 each contribute to the [4Fe-4S] cluster site.

It belongs to the EXO5 family. As to quaternary structure, monomer. It depends on Mg(2+) as a cofactor. [4Fe-4S] cluster serves as cofactor.

It localises to the mitochondrion. In terms of biological role, single strand DNA specific 5' exonuclease involved in mitochondrial DNA replication and recombination. Releases dinucleotides as main products of catalysis. Has the capacity to slide across 5'double-stranded DNA or 5'RNA sequences and resumes cutting two nucleotides downstream of the double-stranded-to-single-stranded junction or RNA-to-DNA junction, respectively. The sequence is that of Exonuclease V, mitochondrial (EXO5) from Saccharomyces cerevisiae (strain ATCC 204508 / S288c) (Baker's yeast).